Consider the following 220-residue polypeptide: Large ribosomal subunit protein bL9 (220 aa).

The span at 167–184 (AAAEVEQAEDVAAAEQQD) shows a compositional bias: low complexity. The disordered stretch occupies residues 167-220 (AAAEVEQAEDVAAAEQQDSSPVDDHADDADGATGGEGRDEGAGDASDGEEMPST).

It belongs to the bacterial ribosomal protein bL9 family.

Its function is as follows. Binds to the 23S rRNA. The polypeptide is Large ribosomal subunit protein bL9 (Anaplasma marginale (strain St. Maries)).